Reading from the N-terminus, the 388-residue chain is Probable acetyl-CoA acetyltransferase (388 aa).

The active-site Acyl-thioester intermediate is the cysteine 84. An Isoglutamyl lysine isopeptide (Lys-Gln) (interchain with Q-Cter in protein Pup) cross-link involves residue lysine 187. Active-site proton acceptor residues include histidine 345 and cysteine 375.

Belongs to the thiolase-like superfamily. Thiolase family.

It catalyses the reaction 2 acetyl-CoA = acetoacetyl-CoA + CoA. This Mycolicibacterium smegmatis (strain ATCC 700084 / mc(2)155) (Mycobacterium smegmatis) protein is Probable acetyl-CoA acetyltransferase.